We begin with the raw amino-acid sequence, 208 residues long: N-(5'-phosphoribosyl)anthranilate isomerase (208 aa).

Belongs to the TrpF family.

It carries out the reaction N-(5-phospho-beta-D-ribosyl)anthranilate = 1-(2-carboxyphenylamino)-1-deoxy-D-ribulose 5-phosphate. It participates in amino-acid biosynthesis; L-tryptophan biosynthesis; L-tryptophan from chorismate: step 3/5. This chain is N-(5'-phosphoribosyl)anthranilate isomerase, found in Methanothrix thermoacetophila (strain DSM 6194 / JCM 14653 / NBRC 101360 / PT) (Methanosaeta thermophila).